The primary structure comprises 539 residues: Chaperonin GroEL (539 aa).

ATP is bound by residues 29–32 (TLGP), 86–90 (DGTTT), glycine 413, and aspartate 492.

The protein belongs to the chaperonin (HSP60) family. In terms of assembly, forms a cylinder of 14 subunits composed of two heptameric rings stacked back-to-back. Interacts with the co-chaperonin GroES.

The protein localises to the cytoplasm. The enzyme catalyses ATP + H2O + a folded polypeptide = ADP + phosphate + an unfolded polypeptide.. In terms of biological role, together with its co-chaperonin GroES, plays an essential role in assisting protein folding. The GroEL-GroES system forms a nano-cage that allows encapsulation of the non-native substrate proteins and provides a physical environment optimized to promote and accelerate protein folding. The polypeptide is Chaperonin GroEL (Fusobacterium nucleatum subsp. polymorphum (Fusobacterium polymorphum)).